The sequence spans 376 residues: Flagellar P-ring protein 2 (376 aa).

The N-terminal stretch at 1-19 is a signal peptide; that stretch reads MTRLLLALILVVSAASAQA.

The protein belongs to the FlgI family. In terms of assembly, the basal body constitutes a major portion of the flagellar organelle and consists of four rings (L,P,S, and M) mounted on a central rod.

The protein localises to the periplasm. The protein resides in the bacterial flagellum basal body. In terms of biological role, assembles around the rod to form the L-ring and probably protects the motor/basal body from shearing forces during rotation. This chain is Flagellar P-ring protein 2, found in Bradyrhizobium diazoefficiens (strain JCM 10833 / BCRC 13528 / IAM 13628 / NBRC 14792 / USDA 110).